The sequence spans 68 residues: Bifunctional protein GlmU (68 aa).

Residues 9 to 12 (LAAG) and Lys23 contribute to the UDP-N-acetyl-alpha-D-glucosamine site.

In the N-terminal section; belongs to the N-acetylglucosamine-1-phosphate uridyltransferase family. The protein in the C-terminal section; belongs to the transferase hexapeptide repeat family. As to quaternary structure, homotrimer. It depends on Mg(2+) as a cofactor.

Its subcellular location is the cytoplasm. It carries out the reaction alpha-D-glucosamine 1-phosphate + acetyl-CoA = N-acetyl-alpha-D-glucosamine 1-phosphate + CoA + H(+). It catalyses the reaction N-acetyl-alpha-D-glucosamine 1-phosphate + UTP + H(+) = UDP-N-acetyl-alpha-D-glucosamine + diphosphate. Its pathway is nucleotide-sugar biosynthesis; UDP-N-acetyl-alpha-D-glucosamine biosynthesis; N-acetyl-alpha-D-glucosamine 1-phosphate from alpha-D-glucosamine 6-phosphate (route II): step 2/2. It functions in the pathway nucleotide-sugar biosynthesis; UDP-N-acetyl-alpha-D-glucosamine biosynthesis; UDP-N-acetyl-alpha-D-glucosamine from N-acetyl-alpha-D-glucosamine 1-phosphate: step 1/1. The protein operates within bacterial outer membrane biogenesis; LPS lipid A biosynthesis. Functionally, catalyzes the last two sequential reactions in the de novo biosynthetic pathway for UDP-N-acetylglucosamine (UDP-GlcNAc). The C-terminal domain catalyzes the transfer of acetyl group from acetyl coenzyme A to glucosamine-1-phosphate (GlcN-1-P) to produce N-acetylglucosamine-1-phosphate (GlcNAc-1-P), which is converted into UDP-GlcNAc by the transfer of uridine 5-monophosphate (from uridine 5-triphosphate), a reaction catalyzed by the N-terminal domain. This is Bifunctional protein GlmU (glmU) from Priestia megaterium (Bacillus megaterium).